Consider the following 346-residue polypeptide: Isopentenyl-diphosphate delta-isomerase (346 aa).

Residue 12-13 coordinates substrate; sequence RK. FMN is bound by residues 67 to 69, S97, and N126; that span reads ALT. A substrate-binding site is contributed by 97-99; the sequence is SQR. Q156 serves as a coordination point for substrate. Position 157 (E157) interacts with Mg(2+). Residues K188, T218, 263 to 265, and 284 to 285 contribute to the FMN site; these read GIR and AG.

It belongs to the IPP isomerase type 2 family. Homooctamer. Dimer of tetramers. It depends on FMN as a cofactor. NADPH is required as a cofactor. The cofactor is Mg(2+).

Its subcellular location is the cytoplasm. It carries out the reaction isopentenyl diphosphate = dimethylallyl diphosphate. Involved in the biosynthesis of isoprenoids. Catalyzes the 1,3-allylic rearrangement of the homoallylic substrate isopentenyl (IPP) to its allylic isomer, dimethylallyl diphosphate (DMAPP). The sequence is that of Isopentenyl-diphosphate delta-isomerase from Moorella thermoacetica (strain ATCC 39073 / JCM 9320).